Here is a 340-residue protein sequence, read N- to C-terminus: Protein-arginine kinase (340 aa).

In terms of domain architecture, Phosphagen kinase C-terminal spans 21–242 (VVLSSRIRLA…EQIIMQERVA (222 aa)). ATP-binding positions include 24–28 (SSRIR), His79, Arg113, 164–168 (RASVM), and 195–200 (RGIYGE).

This sequence belongs to the ATP:guanido phosphotransferase family.

The enzyme catalyses L-arginyl-[protein] + ATP = N(omega)-phospho-L-arginyl-[protein] + ADP + H(+). Functionally, catalyzes the specific phosphorylation of arginine residues in proteins. The protein is Protein-arginine kinase of Listeria monocytogenes serotype 4b (strain F2365).